A 700-amino-acid chain; its full sequence is Pentatricopeptide repeat-containing protein 1, mitochondrial (700 aa).

A disordered region spans residues Ser49–Ser93. Residues Asn62–Thr78 show a composition bias toward polar residues. Residues Gln79–Ser88 are compositionally biased toward acidic residues. 6 PPR repeats span residues Thr135–Pro171, Met172–Pro206, Ser207–Leu245, Asn246–Val280, Thr281–Pro317, and Ser318–Leu354. The disordered stretch occupies residues Ser393–Val414. PPR repeat units lie at residues Asp519 to Pro553, Asn554 to Pro585, and Asn586 to Val620. The disordered stretch occupies residues His672–Arg700. A compositionally biased stretch (basic and acidic residues) spans Pro681–Asp692.

It belongs to the PTCD1 family. In terms of assembly, associates with mitochondrial leucine tRNAs. Interacts with ELAC2. Abundant in testes, skeletal muscle and heart.

The protein localises to the mitochondrion. The protein resides in the mitochondrion matrix. Its function is as follows. Mitochondrial protein implicated in negative regulation of leucine tRNA levels, as well as negative regulation of mitochondria-encoded proteins and COX activity. Also affects the 3'-processing of mitochondrial tRNAs. The chain is Pentatricopeptide repeat-containing protein 1, mitochondrial (PTCD1) from Homo sapiens (Human).